The following is a 203-amino-acid chain: Holliday junction branch migration complex subunit RuvA (203 aa).

The interval 1-64 is domain I; the sequence is MIGRLRGIIL…EDAQLLYGFN (64 aa). Residues 65 to 142 form a domain II region; the sequence is NKQERTLFKE…KGLHGDLFTP (78 aa). Positions 143–154 are flexible linker; sequence AVDLVLTSPASP. The interval 155 to 203 is domain III; that stretch reads TSEDAEQEAVAALVALGYKPQEASRMVNKIARPDASSETLIRDALRAAL.

This sequence belongs to the RuvA family. Homotetramer. Forms an RuvA(8)-RuvB(12)-Holliday junction (HJ) complex. HJ DNA is sandwiched between 2 RuvA tetramers; dsDNA enters through RuvA and exits via RuvB. An RuvB hexamer assembles on each DNA strand where it exits the tetramer. Each RuvB hexamer is contacted by two RuvA subunits (via domain III) on 2 adjacent RuvB subunits; this complex drives branch migration. In the full resolvosome a probable DNA-RuvA(4)-RuvB(12)-RuvC(2) complex forms which resolves the HJ.

The protein resides in the cytoplasm. Its function is as follows. The RuvA-RuvB-RuvC complex processes Holliday junction (HJ) DNA during genetic recombination and DNA repair, while the RuvA-RuvB complex plays an important role in the rescue of blocked DNA replication forks via replication fork reversal (RFR). RuvA specifically binds to HJ cruciform DNA, conferring on it an open structure. The RuvB hexamer acts as an ATP-dependent pump, pulling dsDNA into and through the RuvAB complex. HJ branch migration allows RuvC to scan DNA until it finds its consensus sequence, where it cleaves and resolves the cruciform DNA. The polypeptide is Holliday junction branch migration complex subunit RuvA (Salmonella choleraesuis (strain SC-B67)).